The sequence spans 178 residues: Cell division protein ZapC (178 aa).

This sequence belongs to the ZapC family. Interacts directly with FtsZ.

Its subcellular location is the cytoplasm. Contributes to the efficiency of the cell division process by stabilizing the polymeric form of the cell division protein FtsZ. Acts by promoting interactions between FtsZ protofilaments and suppressing the GTPase activity of FtsZ. This chain is Cell division protein ZapC, found in Pseudoalteromonas atlantica (strain T6c / ATCC BAA-1087).